Reading from the N-terminus, the 82-residue chain is Small ribosomal subunit protein bS16 (82 aa).

It belongs to the bacterial ribosomal protein bS16 family.

This chain is Small ribosomal subunit protein bS16, found in Histophilus somni (strain 2336) (Haemophilus somnus).